The primary structure comprises 1529 residues: DNA-directed RNA polymerase subunit beta' (1529 aa).

The Zn(2+) site is built by Cys156, Cys158, Cys183, and Cys186. Mg(2+)-binding residues include Asp1328, Asp1330, and Asp1332.

Belongs to the RNA polymerase beta' chain family. RpoC1 subfamily. In plastids the minimal PEP RNA polymerase catalytic core is composed of four subunits: alpha, beta, beta', and beta''. When a (nuclear-encoded) sigma factor is associated with the core the holoenzyme is formed, which can initiate transcription. Mg(2+) is required as a cofactor. Zn(2+) serves as cofactor.

It is found in the plastid. The protein resides in the chloroplast. The catalysed reaction is RNA(n) + a ribonucleoside 5'-triphosphate = RNA(n+1) + diphosphate. Its function is as follows. DNA-dependent RNA polymerase catalyzes the transcription of DNA into RNA using the four ribonucleoside triphosphates as substrates. The protein is DNA-directed RNA polymerase subunit beta' of Tetradesmus obliquus (Green alga).